The chain runs to 191 residues: Putative 3-methyladenine DNA glycosylase (191 aa).

The protein belongs to the DNA glycosylase MPG family.

This Carboxydothermus hydrogenoformans (strain ATCC BAA-161 / DSM 6008 / Z-2901) protein is Putative 3-methyladenine DNA glycosylase.